The primary structure comprises 218 residues: rRNA methyltransferase 2, mitochondrial (218 aa).

Residues 59-62, Asp80, 96-97, and Asp133 contribute to the S-adenosyl-L-methionine site; these read PGSW and DI. The Proton acceptor role is filled by Lys173.

Belongs to the class I-like SAM-binding methyltransferase superfamily. RNA methyltransferase RlmE family.

It localises to the mitochondrion. It catalyses the reaction a uridine in 21S rRNA + S-adenosyl-L-methionine = a 2'-O-methyluridine in 21S rRNA + S-adenosyl-L-homocysteine + H(+). S-adenosyl-L-methionine-dependent 2'-O-ribose methyltransferase that catalyzes the formation of the 2'-O-methyluridine corresponding to position 2791 in S.cerevisiae 21S mitochondrial large subunit ribosomal RNA (mtLSU rRNA), a universally conserved modification in the peptidyl transferase domain of the mtLSU rRNA. The polypeptide is rRNA methyltransferase 2, mitochondrial (Schizosaccharomyces pombe (strain 972 / ATCC 24843) (Fission yeast)).